The sequence spans 177 residues: Large ribosomal subunit protein uL6 (177 aa).

This sequence belongs to the universal ribosomal protein uL6 family. In terms of assembly, part of the 50S ribosomal subunit.

This protein binds to the 23S rRNA, and is important in its secondary structure. It is located near the subunit interface in the base of the L7/L12 stalk, and near the tRNA binding site of the peptidyltransferase center. This Thioalkalivibrio sulfidiphilus (strain HL-EbGR7) protein is Large ribosomal subunit protein uL6.